The following is a 338-amino-acid chain: Probable tRNA pseudouridine synthase B (338 aa).

Residue Asp-78 is the Nucleophile of the active site. A PUA domain is found at Leu-245–Met-320.

It belongs to the pseudouridine synthase TruB family. Type 2 subfamily.

The catalysed reaction is uridine(55) in tRNA = pseudouridine(55) in tRNA. Could be responsible for synthesis of pseudouridine from uracil-55 in the psi GC loop of transfer RNAs. This chain is Probable tRNA pseudouridine synthase B, found in Methanosarcina acetivorans (strain ATCC 35395 / DSM 2834 / JCM 12185 / C2A).